Here is a 400-residue protein sequence, read N- to C-terminus: MPHFLAKLDSKPLEYPLIRGDFCFHREFLSLKHPTKSCVHASFKNDVFLLQKIRRAGDFLIKSEKATPLKREILKQALRIYSQSFEVISHNLQENSKHASQKKALDLETFEDFIQKNQAPILIEIGFGSGRHLIELAKNNPTTTCLGIEIHTPSIAQALKQIELLDLKNLHILQGDGRLVLESMPNHRCEKIFVHFPVPWNEKKHRRVLSEKFLNEALRVLKPRGFLELRTDDSLCFEDSLKLALKNFQCEIEIKKNAQIPVVSKYEARWNKLKKDIYDLKIYSLGLDENPTQNHALDFSFDTITIDKESVGAILKTPKIIKEGYFVHVCNIYENKGDFLVELSMGDFDWPVRLFVLLAENQVFYLNKSPLKTLNNHKAHLLLQNILSQKELDERDHRSE.

S-adenosyl-L-methionine is bound by residues Glu-124, Glu-149, and Asp-176. A substrate-binding site is contributed by Asp-232.

This sequence belongs to the class I-like SAM-binding methyltransferase superfamily. TrmB family.

The enzyme catalyses guanosine(46) in tRNA + S-adenosyl-L-methionine = N(7)-methylguanosine(46) in tRNA + S-adenosyl-L-homocysteine. The protein operates within tRNA modification; N(7)-methylguanine-tRNA biosynthesis. Functionally, catalyzes the formation of N(7)-methylguanine at position 46 (m7G46) in tRNA. This Helicobacter pylori (strain J99 / ATCC 700824) (Campylobacter pylori J99) protein is tRNA (guanine-N(7)-)-methyltransferase.